The following is a 286-amino-acid chain: Translocon-associated protein subunit alpha (286 aa).

An N-terminal signal peptide occupies residues 1 to 18; sequence MRLLPRLLLLLLLVFPAT. Residues 19-207 are Lumenal-facing; that stretch reads VLFRGGPRGL…EREDGLDGET (189 aa). Acidic residues predominate over residues 39-75; the sequence is EETVEDSIIEDEDDEAEVEEDEPTDLVEDKEEEDVSG. The segment at 39 to 83 is disordered; that stretch reads EETVEDSIIEDEDDEAEVEEDEPTDLVEDKEEEDVSGEPEASPSA. Residues asparagine 136 and asparagine 191 are each glycosylated (N-linked (GlcNAc...) asparagine). Residues 208 to 228 form a helical membrane-spanning segment; that stretch reads IFMYMFLAGLGLLVIVGLHQL. The Cytoplasmic segment spans residues 229–286; the sequence is LESRKRKRPIQKVEMGTSSQNDVDMSWIPQETLNQINKASPRRLPRKRAQKRSVGSDE. A Phosphoserine modification is found at serine 247. Threonine 260 carries the post-translational modification Phosphothreonine. The tract at residues 261-286 is disordered; sequence LNQINKASPRRLPRKRAQKRSVGSDE. The residue at position 268 (serine 268) is a Phosphoserine. Basic residues predominate over residues 268 to 279; the sequence is SPRRLPRKRAQK.

The protein belongs to the TRAP-alpha family. As to quaternary structure, heterotetramer of TRAP-alpha, TRAP-beta, TRAP-delta and TRAP-gamma. Interacts with palmitoylated calnexin (CALX), the interaction is required for efficient folding of glycosylated proteins.

The protein resides in the endoplasmic reticulum membrane. Its function is as follows. TRAP proteins are part of a complex whose function is to bind calcium to the ER membrane and thereby regulate the retention of ER resident proteins. May be involved in the recycling of the translocation apparatus after completion of the translocation process or may function as a membrane-bound chaperone facilitating folding of translocated proteins. The chain is Translocon-associated protein subunit alpha (SSR1) from Homo sapiens (Human).